A 195-amino-acid chain; its full sequence is 3-isopropylmalate dehydratase small subunit (195 aa).

The protein belongs to the LeuD family. LeuD type 1 subfamily. As to quaternary structure, heterodimer of LeuC and LeuD.

The enzyme catalyses (2R,3S)-3-isopropylmalate = (2S)-2-isopropylmalate. It participates in amino-acid biosynthesis; L-leucine biosynthesis; L-leucine from 3-methyl-2-oxobutanoate: step 2/4. Catalyzes the isomerization between 2-isopropylmalate and 3-isopropylmalate, via the formation of 2-isopropylmaleate. The protein is 3-isopropylmalate dehydratase small subunit of Corynebacterium kroppenstedtii (strain DSM 44385 / JCM 11950 / CIP 105744 / CCUG 35717).